A 121-amino-acid chain; its full sequence is Large ribosomal subunit protein uL14 (121 aa).

The protein belongs to the universal ribosomal protein uL14 family. As to quaternary structure, part of the 50S ribosomal subunit. Forms a cluster with proteins L3 and L19. In the 70S ribosome, L14 and L19 interact and together make contacts with the 16S rRNA in bridges B5 and B8.

Its function is as follows. Binds to 23S rRNA. Forms part of two intersubunit bridges in the 70S ribosome. In Synechococcus sp. (strain CC9311), this protein is Large ribosomal subunit protein uL14.